Here is a 247-residue protein sequence, read N- to C-terminus: Putative trypsin-6 (247 aa).

The first 15 residues, 1 to 15 (MNPLLILAFVGAAVA), serve as a signal peptide directing secretion. The Peptidase S1 domain maps to 24–244 (IVGGYTCEEN…YVDWIKDTIA (221 aa)). C48 and C64 form a disulfide bridge. The active-site Charge relay system is the H63. E75, N77, V80, and E85 together coordinate Ca(2+). D107 serves as the catalytic Charge relay system. 3 cysteine pairs are disulfide-bonded: C139/C206, C171/C185, and C196/C220. Residue S200 is the Charge relay system of the active site.

It belongs to the peptidase S1 family. Tryptase subfamily. As to expression, overexpressed in metastasing in non small cell lung tumors, leading to an enhanced cell migration.

The protein localises to the secreted. It catalyses the reaction Preferential cleavage: Arg-|-Xaa, Lys-|-Xaa.. Its function is as follows. May regulate cell migration. The protein is Putative trypsin-6 (PRSS3P2) of Homo sapiens (Human).